A 156-amino-acid chain; its full sequence is Phospholipase A2 A2-hormotoxin-Apt1a (156 aa).

A signal peptide spans 1-19 (MQLYTYFFTFSLVLILALA). Residues 20–35 (DQENKSLDFTQEGGIA) constitute a propeptide that is removed on maturation. 5 disulfide bridges follow: Cys-62-Cys-156, Cys-64-Cys-80, Cys-79-Cys-138, Cys-86-Cys-131, and Cys-115-Cys-129. Ca(2+)-binding residues include Gly-65 and Gly-67. His-83 is a catalytic residue. Asp-84 provides a ligand contact to Ca(2+). Residue Asp-132 is part of the active site.

The protein belongs to the phospholipase A2 family. Ca(2+) serves as cofactor.

It is found in the secreted. Its subcellular location is the nematocyst. The enzyme catalyses a 1,2-diacyl-sn-glycero-3-phosphocholine + H2O = a 1-acyl-sn-glycero-3-phosphocholine + a fatty acid + H(+). Sea anemone phospholipase A2 (PLA2) that may have a role both in defense and in digestion, since its expression and enzymatic activity were found both in the acontia (defensive organs) and tentacles. PLA2 catalyzes the calcium-dependent hydrolysis of the 2-acyl groups in 3-sn-phosphoglycerides. The chain is Phospholipase A2 A2-hormotoxin-Apt1a from Adamsia palliata (Cloak anemone).